A 315-amino-acid chain; its full sequence is Methionyl-tRNA formyltransferase (315 aa).

Residue 113–116 coordinates (6S)-5,6,7,8-tetrahydrofolate; sequence SLLP.

The protein belongs to the Fmt family.

The enzyme catalyses L-methionyl-tRNA(fMet) + (6R)-10-formyltetrahydrofolate = N-formyl-L-methionyl-tRNA(fMet) + (6S)-5,6,7,8-tetrahydrofolate + H(+). Its function is as follows. Attaches a formyl group to the free amino group of methionyl-tRNA(fMet). The formyl group appears to play a dual role in the initiator identity of N-formylmethionyl-tRNA by promoting its recognition by IF2 and preventing the misappropriation of this tRNA by the elongation apparatus. The chain is Methionyl-tRNA formyltransferase from Photorhabdus laumondii subsp. laumondii (strain DSM 15139 / CIP 105565 / TT01) (Photorhabdus luminescens subsp. laumondii).